A 64-amino-acid chain; its full sequence is DNA gyrase inhibitor YacG (64 aa).

Zn(2+) is bound by residues Cys9, Cys12, Cys28, and Cys32. Residues 45–64 are disordered; sequence KRIPSSGDLSESDDWSEEPK. A compositionally biased stretch (acidic residues) spans 54 to 64; that stretch reads SESDDWSEEPK.

It belongs to the DNA gyrase inhibitor YacG family. In terms of assembly, interacts with GyrB. Requires Zn(2+) as cofactor.

In terms of biological role, inhibits all the catalytic activities of DNA gyrase by preventing its interaction with DNA. Acts by binding directly to the C-terminal domain of GyrB, which probably disrupts DNA binding by the gyrase. This Escherichia fergusonii (strain ATCC 35469 / DSM 13698 / CCUG 18766 / IAM 14443 / JCM 21226 / LMG 7866 / NBRC 102419 / NCTC 12128 / CDC 0568-73) protein is DNA gyrase inhibitor YacG.